Reading from the N-terminus, the 901-residue chain is Protein translocase subunit SecA (901 aa).

ATP-binding positions include glutamine 87, 105–109 (GEGKT), and aspartate 512. The segment at 859–901 (HQDDDSAAAAALAAQTGERKVGRNDPCPCGSGKKYKQCHGRLQ) is disordered. Zn(2+) contacts are provided by cysteine 885, cysteine 887, cysteine 896, and histidine 897. The span at 891-901 (KKYKQCHGRLQ) shows a compositional bias: basic residues.

It belongs to the SecA family. Monomer and homodimer. Part of the essential Sec protein translocation apparatus which comprises SecA, SecYEG and auxiliary proteins SecDF-YajC and YidC. The cofactor is Zn(2+).

It is found in the cell inner membrane. It localises to the cytoplasm. It carries out the reaction ATP + H2O + cellular proteinSide 1 = ADP + phosphate + cellular proteinSide 2.. Its function is as follows. Part of the Sec protein translocase complex. Interacts with the SecYEG preprotein conducting channel. Has a central role in coupling the hydrolysis of ATP to the transfer of proteins into and across the cell membrane, serving both as a receptor for the preprotein-SecB complex and as an ATP-driven molecular motor driving the stepwise translocation of polypeptide chains across the membrane. The chain is Protein translocase subunit SecA from Escherichia coli O127:H6 (strain E2348/69 / EPEC).